Reading from the N-terminus, the 146-residue chain is Large ribosomal subunit protein uL16 (146 aa).

It belongs to the universal ribosomal protein uL16 family. In terms of assembly, part of the 50S ribosomal subunit.

Functionally, binds 23S rRNA and is also seen to make contacts with the A and possibly P site tRNAs. The chain is Large ribosomal subunit protein uL16 from Lactobacillus acidophilus (strain ATCC 700396 / NCK56 / N2 / NCFM).